A 275-amino-acid chain; its full sequence is uncharacterized protein (275 aa).

2 disordered regions span residues 1 to 25 (MIGGERVLLGSQKREPSNEEDDQEQ) and 185 to 275 (QRGE…RHHM). Over residues 228 to 239 (KPGDGEENAKDD) the composition is skewed to basic and acidic residues.

This is an uncharacterized protein from Neurospora crassa (strain ATCC 24698 / 74-OR23-1A / CBS 708.71 / DSM 1257 / FGSC 987).